A 634-amino-acid chain; its full sequence is MINITLPDGSRREFESPVSVMQVAQSIGAGLAKATIAGQVDGQLVDASDVIDHDASLRIITAKDAEGVEIIRHSCAHLVGHAVKQLYPEVKMVIGPVIAEGFYYDIYSERPFTPDDMAAIEQRMQELIAQDYDVIKKVTPRAEVIEVFAQRGEEYKLRLIEDMSEDITAMGLYYHQEYVDMCRGPHVPNTRFLKAFKLTRISGAYWRGDAKNEQLQRIYGTAWADKKQLDAYILRMEEADKRDHRRIGKAQDLFHLQEEAPGLVFWHPKGWSLWQVVEQYMRKVYRDSGYGEVRCPQILDVSLWQKSGHWDNYQDAMFFTESEKRTYAVKPMNCPGHVQVFNQGLHSYRDLPIRYGEFGACHRNEPSGALHGILRVRGFTQDDGHVFCLESQIESEVTAFHQQALAVYTAFGFDDIQIKIALRPEKRLGDDATWDKAEAALRSALGVCGVEWQELPGEGAFYGPKIEYHLKDAIGRTWQLGTMQVDFMMPGRLGAEYVDENSQKKHPVMLHRAIVGSMERFIGILIEHHAGAFPSWLAPVQVVVANITDAQAEYVDSVRKTLANQGFRVSADLRNEKIGYKIREHTLQRVPYLLVVGDREKENGAVAVRTRSGEDLGTMTVSAFIERLQAEQAA.

A TGS domain is found at 1–61 (MINITLPDGS…DHDASLRIIT (61 aa)). The tract at residues 243–534 (DHRRIGKAQD…LIEHHAGAFP (292 aa)) is catalytic. Zn(2+) contacts are provided by Cys334, His385, and His511.

The protein belongs to the class-II aminoacyl-tRNA synthetase family. Homodimer. The cofactor is Zn(2+).

The protein resides in the cytoplasm. The enzyme catalyses tRNA(Thr) + L-threonine + ATP = L-threonyl-tRNA(Thr) + AMP + diphosphate + H(+). Functionally, catalyzes the attachment of threonine to tRNA(Thr) in a two-step reaction: L-threonine is first activated by ATP to form Thr-AMP and then transferred to the acceptor end of tRNA(Thr). Also edits incorrectly charged L-seryl-tRNA(Thr). In Xanthomonas euvesicatoria pv. vesicatoria (strain 85-10) (Xanthomonas campestris pv. vesicatoria), this protein is Threonine--tRNA ligase.